A 251-amino-acid chain; its full sequence is Ribonuclease 3 (251 aa).

In terms of domain architecture, RNase III spans 3–125 (LATLETRLGH…LFGAVFLDAG (123 aa)). E38 serves as a coordination point for Mg(2+). Residue D42 is part of the active site. 2 residues coordinate Mg(2+): D111 and E114. Residue E114 is part of the active site. Positions 152-222 (DAKTLLQEFL…AKLALEAALV (71 aa)) constitute a DRBM domain.

The protein belongs to the ribonuclease III family. As to quaternary structure, homodimer. It depends on Mg(2+) as a cofactor.

The protein localises to the cytoplasm. It carries out the reaction Endonucleolytic cleavage to 5'-phosphomonoester.. Its function is as follows. Digests double-stranded RNA. Involved in the processing of primary rRNA transcript to yield the immediate precursors to the large and small rRNAs (23S and 16S). Processes some mRNAs, and tRNAs when they are encoded in the rRNA operon. Processes pre-crRNA and tracrRNA of type II CRISPR loci if present in the organism. The sequence is that of Ribonuclease 3 from Bordetella avium (strain 197N).